The sequence spans 100 residues: Integration host factor subunit alpha (100 aa).

Belongs to the bacterial histone-like protein family. In terms of assembly, heterodimer of an alpha and a beta chain.

Its function is as follows. This protein is one of the two subunits of integration host factor, a specific DNA-binding protein that functions in genetic recombination as well as in transcriptional and translational control. The polypeptide is Integration host factor subunit alpha (Buchnera aphidicola subsp. Schizaphis graminum (strain Sg)).